The sequence spans 151 residues: MKCPYCAYGESKVVDSRSTEDGSSIRRRRECLKCNRRYTTYEKIETTPILVIKKNMSREYFDRNKMVNGLMKACQKRPVSRKQIEQIADEVERHISNEMLTEVNTDKIGQIIMKNLKKIDEVSYVRFASVYRQFKDINTFMEEIKNLMDKN.

Residues 3 to 34 (CPYCAYGESKVVDSRSTEDGSSIRRRRECLKC) fold into a zinc finger. In terms of domain architecture, ATP-cone spans 49-139 (ILVIKKNMSR…VYRQFKDINT (91 aa)).

Belongs to the NrdR family. Zn(2+) is required as a cofactor.

Negatively regulates transcription of bacterial ribonucleotide reductase nrd genes and operons by binding to NrdR-boxes. This Clostridium botulinum (strain 657 / Type Ba4) protein is Transcriptional repressor NrdR.